Reading from the N-terminus, the 261-residue chain is MKTYHLNNDIIVTQEQLDHWNEQLIKLETPQEIIAWSIVTFPHLFQTTAFGLTGLVTIDMLSKLSEKYYMPELLFIDTLHHFPQTLTLKNEIEKKYYQPKNQTIHVYKPDGCESEADFASKYGDFLWEKDDDKYDYLAKVEPAHRAYKELHISAVFTGRRKSQGSARSQLSIIEIDELNGILKINPLINWTFEQVKQYIDANNVPYNELLDLGYRSIGDYHSTQPVKEGEDERAGRWKGKAKTECGIHEASRFAQFLKQDA.

It belongs to the PAPS reductase family. CysH subfamily.

It carries out the reaction [thioredoxin]-disulfide + sulfite + adenosine 3',5'-bisphosphate + 2 H(+) = [thioredoxin]-dithiol + 3'-phosphoadenylyl sulfate. The protein operates within sulfur metabolism; hydrogen sulfide biosynthesis; sulfite from sulfate: step 3/3. The NADP dependent reduction of PAPS into sulfite involves thioredoxin which probably plays the role of a thiol carrier. This is Phosphoadenosine phosphosulfate reductase (MET16) from Saccharomyces cerevisiae (strain ATCC 204508 / S288c) (Baker's yeast).